We begin with the raw amino-acid sequence, 343 residues long: MLQTDNLTAAQPQRIVAAQTASAQEELLERALRPKTLDDYIGQDKAKEQLAIFIQAAKKRGEALDHVLLFGPPGLGKTTLAHIIAKELGVNLRQTSGPVLERAGDLAALLTNLDPHDVLFIDEIHRLSPVVEEILYPALEDYRLDIMIGEGPAARSVKIDLPPFTLIGATTRAGMLTNPLRDRFGIVSRLEFYENRDLTTIVSRSAQLLQLDMSEEGAEEIAKRSRGTPRIANRLLRRVRDFADVKNNGTIDGGIADAALSMLDVDAQGLDVMDRKFLEAVLHKFGGGPVGLDNVAAAIGESTDTIEDVIEPYLIQQGFLQRTPRGRMATERAYLHFGLPVEK.

The segment at 4-193 (TDNLTAAQPQ…FGIVSRLEFY (190 aa)) is large ATPase domain (RuvB-L). ATP contacts are provided by residues Leu-32, Arg-33, Gly-74, Lys-77, Thr-78, Thr-79, 140 to 142 (EDY), Arg-183, Tyr-193, and Arg-230. Thr-78 contacts Mg(2+). The segment at 194–264 (ENRDLTTIVS…IADAALSMLD (71 aa)) is small ATPAse domain (RuvB-S). Residues 267–343 (AQGLDVMDRK…YLHFGLPVEK (77 aa)) form a head domain (RuvB-H) region. Residues Arg-322 and Arg-327 each contribute to the DNA site.

It belongs to the RuvB family. Homohexamer. Forms an RuvA(8)-RuvB(12)-Holliday junction (HJ) complex. HJ DNA is sandwiched between 2 RuvA tetramers; dsDNA enters through RuvA and exits via RuvB. An RuvB hexamer assembles on each DNA strand where it exits the tetramer. Each RuvB hexamer is contacted by two RuvA subunits (via domain III) on 2 adjacent RuvB subunits; this complex drives branch migration. In the full resolvosome a probable DNA-RuvA(4)-RuvB(12)-RuvC(2) complex forms which resolves the HJ.

It localises to the cytoplasm. The enzyme catalyses ATP + H2O = ADP + phosphate + H(+). The RuvA-RuvB-RuvC complex processes Holliday junction (HJ) DNA during genetic recombination and DNA repair, while the RuvA-RuvB complex plays an important role in the rescue of blocked DNA replication forks via replication fork reversal (RFR). RuvA specifically binds to HJ cruciform DNA, conferring on it an open structure. The RuvB hexamer acts as an ATP-dependent pump, pulling dsDNA into and through the RuvAB complex. RuvB forms 2 homohexamers on either side of HJ DNA bound by 1 or 2 RuvA tetramers; 4 subunits per hexamer contact DNA at a time. Coordinated motions by a converter formed by DNA-disengaged RuvB subunits stimulates ATP hydrolysis and nucleotide exchange. Immobilization of the converter enables RuvB to convert the ATP-contained energy into a lever motion, pulling 2 nucleotides of DNA out of the RuvA tetramer per ATP hydrolyzed, thus driving DNA branch migration. The RuvB motors rotate together with the DNA substrate, which together with the progressing nucleotide cycle form the mechanistic basis for DNA recombination by continuous HJ branch migration. Branch migration allows RuvC to scan DNA until it finds its consensus sequence, where it cleaves and resolves cruciform DNA. The sequence is that of Holliday junction branch migration complex subunit RuvB from Neisseria meningitidis serogroup C (strain 053442).